The primary structure comprises 411 residues: Tyrosine--tRNA ligase (411 aa).

Tyrosine 34 contributes to the L-tyrosine binding site. Positions 39–48 match the 'HIGH' region motif; it reads CTATSLHIGS. Residues tyrosine 171 and glutamine 175 each coordinate L-tyrosine. A 'KMSKS' region motif is present at residues 231–235; that stretch reads KMGKT. Lysine 234 contacts ATP. One can recognise an S4 RNA-binding domain in the interval 345-411; it reads ISAYELFHEA…GKKRHILVRV (67 aa).

It belongs to the class-I aminoacyl-tRNA synthetase family. TyrS type 1 subfamily. As to quaternary structure, homodimer.

The protein localises to the cytoplasm. It carries out the reaction tRNA(Tyr) + L-tyrosine + ATP = L-tyrosyl-tRNA(Tyr) + AMP + diphosphate + H(+). Catalyzes the attachment of tyrosine to tRNA(Tyr) in a two-step reaction: tyrosine is first activated by ATP to form Tyr-AMP and then transferred to the acceptor end of tRNA(Tyr). The protein is Tyrosine--tRNA ligase of Rickettsia felis (strain ATCC VR-1525 / URRWXCal2) (Rickettsia azadi).